A 211-amino-acid polypeptide reads, in one-letter code: N-(5'-phosphoribosyl)anthranilate isomerase (211 aa).

It belongs to the TrpF family.

It carries out the reaction N-(5-phospho-beta-D-ribosyl)anthranilate = 1-(2-carboxyphenylamino)-1-deoxy-D-ribulose 5-phosphate. Its pathway is amino-acid biosynthesis; L-tryptophan biosynthesis; L-tryptophan from chorismate: step 3/5. The protein is N-(5'-phosphoribosyl)anthranilate isomerase of Pseudomonas aeruginosa (strain UCBPP-PA14).